The following is a 321-amino-acid chain: Ribonuclease Z (321 aa).

7 residues coordinate Zn(2+): histidine 62, histidine 64, aspartate 66, histidine 67, histidine 139, aspartate 210, and histidine 268. Aspartate 66 (proton acceptor) is an active-site residue.

It belongs to the RNase Z family. In terms of assembly, homodimer. It depends on Zn(2+) as a cofactor.

The catalysed reaction is Endonucleolytic cleavage of RNA, removing extra 3' nucleotides from tRNA precursor, generating 3' termini of tRNAs. A 3'-hydroxy group is left at the tRNA terminus and a 5'-phosphoryl group is left at the trailer molecule.. Zinc phosphodiesterase, which displays some tRNA 3'-processing endonuclease activity. Probably involved in tRNA maturation, by removing a 3'-trailer from precursor tRNA. The polypeptide is Ribonuclease Z (Trichodesmium erythraeum (strain IMS101)).